The primary structure comprises 142 residues: Putative pre-16S rRNA nuclease (142 aa).

Belongs to the YqgF nuclease family.

It is found in the cytoplasm. In terms of biological role, could be a nuclease involved in processing of the 5'-end of pre-16S rRNA. This is Putative pre-16S rRNA nuclease from Blochmanniella floridana.